The primary structure comprises 489 residues: Rhamnulokinase (489 aa).

Residue 13–17 (ASSGR) participates in ATP binding. Cys-68 and Cys-222 are disulfide-bonded. Substrate-binding positions include Gly-83 and 236-238 (HDT). Residue Asp-237 is the Proton acceptor of the active site. Thr-259 contacts ATP. Asn-296 is a binding site for substrate. Gln-304 contributes to the ATP binding site. Cysteines 353 and 370 form a disulfide. Position 402 (Gly-402) interacts with ATP. A disulfide bond links Cys-413 and Cys-417.

Belongs to the rhamnulokinase family. As to quaternary structure, monomer. Requires Mg(2+) as cofactor.

The catalysed reaction is L-rhamnulose + ATP = L-rhamnulose 1-phosphate + ADP + H(+). The protein operates within carbohydrate degradation; L-rhamnose degradation; glycerone phosphate from L-rhamnose: step 2/3. In terms of biological role, involved in the catabolism of L-rhamnose (6-deoxy-L-mannose). Catalyzes the transfer of the gamma-phosphate group from ATP to the 1-hydroxyl group of L-rhamnulose to yield L-rhamnulose 1-phosphate. The sequence is that of Rhamnulokinase from Escherichia coli O127:H6 (strain E2348/69 / EPEC).